The following is a 298-amino-acid chain: Phosphatidylglycerol--prolipoprotein diacylglyceryl transferase (298 aa).

3 helical membrane-spanning segments follow: residues 17-37 (LAVR…IVVG), 59-79 (MMFY…VLFY), and 97-117 (GGMS…LFAW). Residue R142 participates in a 1,2-diacyl-sn-glycero-3-phospho-(1'-sn-glycerol) binding. A run of 2 helical transmembrane segments spans residues 230-250 (MGAI…TVEF) and 257-277 (FLGL…PMIV).

The protein belongs to the Lgt family.

It is found in the cell inner membrane. It carries out the reaction L-cysteinyl-[prolipoprotein] + a 1,2-diacyl-sn-glycero-3-phospho-(1'-sn-glycerol) = an S-1,2-diacyl-sn-glyceryl-L-cysteinyl-[prolipoprotein] + sn-glycerol 1-phosphate + H(+). The protein operates within protein modification; lipoprotein biosynthesis (diacylglyceryl transfer). Functionally, catalyzes the transfer of the diacylglyceryl group from phosphatidylglycerol to the sulfhydryl group of the N-terminal cysteine of a prolipoprotein, the first step in the formation of mature lipoproteins. This Burkholderia cenocepacia (strain ATCC BAA-245 / DSM 16553 / LMG 16656 / NCTC 13227 / J2315 / CF5610) (Burkholderia cepacia (strain J2315)) protein is Phosphatidylglycerol--prolipoprotein diacylglyceryl transferase.